The chain runs to 440 residues: Ribosomal protein uS12 methylthiotransferase RimO (440 aa).

The MTTase N-terminal domain occupies 2–117; that stretch reads VKVGFVSLGC…LPNVIKKLYE (116 aa). Residues Cys-11, Cys-47, Cys-80, Cys-156, Cys-160, and Cys-163 each coordinate [4Fe-4S] cluster. The Radical SAM core domain occupies 142-371; sequence ATPKFYAYIK…LNLQRKISLE (230 aa). The TRAM domain occupies 374–440; that stretch reads RKRISKKYEV…FEYDLVGEVI (67 aa).

It belongs to the methylthiotransferase family. RimO subfamily. It depends on [4Fe-4S] cluster as a cofactor.

Its subcellular location is the cytoplasm. It catalyses the reaction L-aspartate(89)-[ribosomal protein uS12]-hydrogen + (sulfur carrier)-SH + AH2 + 2 S-adenosyl-L-methionine = 3-methylsulfanyl-L-aspartate(89)-[ribosomal protein uS12]-hydrogen + (sulfur carrier)-H + 5'-deoxyadenosine + L-methionine + A + S-adenosyl-L-homocysteine + 2 H(+). In terms of biological role, catalyzes the methylthiolation of an aspartic acid residue of ribosomal protein uS12. This Caldicellulosiruptor saccharolyticus (strain ATCC 43494 / DSM 8903 / Tp8T 6331) protein is Ribosomal protein uS12 methylthiotransferase RimO.